The chain runs to 383 residues: Probable cell wall hydrolase LytN (383 aa).

The first 49 residues, methionine 1–alanine 49, serve as a signal peptide directing secretion. The 45-residue stretch at glutamine 175–valine 219 folds into the LysM domain. Residues asparagine 241–arginine 378 enclose the Peptidase C51 domain.

Its subcellular location is the secreted. Probably involved in peptidoglycan hydrolysis. This Staphylococcus aureus (strain NCTC 8325 / PS 47) protein is Probable cell wall hydrolase LytN (lytN).